The sequence spans 344 residues: Heat-inducible transcription repressor HrcA (344 aa).

It belongs to the HrcA family.

Functionally, negative regulator of class I heat shock genes (grpE-dnaK-dnaJ and groELS operons). Prevents heat-shock induction of these operons. The polypeptide is Heat-inducible transcription repressor HrcA (Streptococcus pneumoniae (strain Taiwan19F-14)).